Here is a 76-residue protein sequence, read N- to C-terminus: Large ribosomal subunit protein uL29 (76 aa).

It belongs to the universal ribosomal protein uL29 family.

The protein is Large ribosomal subunit protein uL29 of Corynebacterium efficiens (strain DSM 44549 / YS-314 / AJ 12310 / JCM 11189 / NBRC 100395).